The primary structure comprises 142 residues: MRKWEHYEHTADIGVRGYGSTLEEAFEAVALGLFDVMVNVKKVEPKECREVEVEEEDLEALLYSFLEELLVLHDMEGLVFGDVKVRIEKTENGYKLKAKACGEVLNPEKHEPKEEVKAITYHDMKIEKLPDGRWMAQFVPDL.

Positions 12 and 141 each coordinate Ca(2+).

It belongs to the archease family.

Functionally, activates the tRNA-splicing ligase complex by facilitating the enzymatic turnover of catalytic subunit RtcB. Acts by promoting the guanylylation of RtcB, a key intermediate step in tRNA ligation. Can also alter the NTP specificity of RtcB such that ATP, dGTP or ITP is used efficiently. This chain is Protein archease, found in Thermococcus kodakarensis (strain ATCC BAA-918 / JCM 12380 / KOD1) (Pyrococcus kodakaraensis (strain KOD1)).